The following is a 341-amino-acid chain: Outer membrane protein assembly factor BamD (341 aa).

The first 17 residues, 1–17 (MQVKHLLLIAILALTAA), serve as a signal peptide directing secretion. Cys-18 is lipidated: N-palmitoyl cysteine. Cys-18 carries the S-diacylglycerol cysteine lipid modification. The segment covering 289 to 316 (DVIKQYEDAEREIPAELKPENQDHSADD) has biased composition (basic and acidic residues). The interval 289–330 (DVIKQYEDAEREIPAELKPENQDHSADDEKPESDDDEDSGRS) is disordered. The span at 317–326 (EKPESDDDED) shows a compositional bias: acidic residues.

Belongs to the BamD family. In terms of assembly, part of the Bam complex.

It localises to the cell outer membrane. Part of the outer membrane protein assembly complex, which is involved in assembly and insertion of beta-barrel proteins into the outer membrane. The polypeptide is Outer membrane protein assembly factor BamD (Pseudomonas aeruginosa (strain ATCC 15692 / DSM 22644 / CIP 104116 / JCM 14847 / LMG 12228 / 1C / PRS 101 / PAO1)).